Reading from the N-terminus, the 96-residue chain is Large ribosomal subunit protein bL25 (96 aa).

This sequence belongs to the bacterial ribosomal protein bL25 family. Part of the 50S ribosomal subunit; part of the 5S rRNA/L5/L18/L25 subcomplex. Contacts the 5S rRNA. Binds to the 5S rRNA independently of L5 and L18.

Its function is as follows. This is one of the proteins that binds to the 5S RNA in the ribosome where it forms part of the central protuberance. The sequence is that of Large ribosomal subunit protein bL25 from Francisella tularensis subsp. tularensis (strain FSC 198).